We begin with the raw amino-acid sequence, 338 residues long: Ketol-acid reductoisomerase (NADP(+)) (338 aa).

A KARI N-terminal Rossmann domain is found at 1–181; the sequence is MKVFYDNDAD…GGTRAGVIET (181 aa). NADP(+) is bound by residues 24–27, Arg-47, Ser-50, Ser-52, and 82–85; these read YGSQ and DEGQ. The active site involves His-107. Gly-133 is an NADP(+) binding site. Residues 182 to 327 form the KARI C-terminal knotted domain; it reads SFREETETDL…SKLRSMMTWI (146 aa). Positions 190, 194, 226, and 230 each coordinate Mg(2+). Ser-251 lines the substrate pocket.

This sequence belongs to the ketol-acid reductoisomerase family. It depends on Mg(2+) as a cofactor.

The enzyme catalyses (2R)-2,3-dihydroxy-3-methylbutanoate + NADP(+) = (2S)-2-acetolactate + NADPH + H(+). The catalysed reaction is (2R,3R)-2,3-dihydroxy-3-methylpentanoate + NADP(+) = (S)-2-ethyl-2-hydroxy-3-oxobutanoate + NADPH + H(+). Its pathway is amino-acid biosynthesis; L-isoleucine biosynthesis; L-isoleucine from 2-oxobutanoate: step 2/4. The protein operates within amino-acid biosynthesis; L-valine biosynthesis; L-valine from pyruvate: step 2/4. Involved in the biosynthesis of branched-chain amino acids (BCAA). Catalyzes an alkyl-migration followed by a ketol-acid reduction of (S)-2-acetolactate (S2AL) to yield (R)-2,3-dihydroxy-isovalerate. In the isomerase reaction, S2AL is rearranged via a Mg-dependent methyl migration to produce 3-hydroxy-3-methyl-2-ketobutyrate (HMKB). In the reductase reaction, this 2-ketoacid undergoes a metal-dependent reduction by NADPH to yield (R)-2,3-dihydroxy-isovalerate. The polypeptide is Ketol-acid reductoisomerase (NADP(+)) (Acidithiobacillus ferrooxidans (strain ATCC 23270 / DSM 14882 / CIP 104768 / NCIMB 8455) (Ferrobacillus ferrooxidans (strain ATCC 23270))).